We begin with the raw amino-acid sequence, 364 residues long: Appendage-associated protein (364 aa).

Coiled-coil stretches lie at residues 142–196 (IIHE…AECR) and 288–313 (RIAQ…ALGK).

Its subcellular location is the secreted. Associates with actin filament appendages that are formed in the inclusion appendages of the parasitophorous vacuole during infection of the host erythrocyte. In Anaplasma marginale (strain Illinois), this protein is Appendage-associated protein.